We begin with the raw amino-acid sequence, 252 residues long: Neurexophilin-3 (252 aa).

Residues 1–22 form the signal peptide; it reads MQLTRCCFVFLVQGSLYLVICG. Residues 23–75 form an II region; sequence QDDGPPGSEDPEHDDHEGQPRPRVPRKRGHISPKSRPLANSTLLGLLAPPGEV. The tract at residues 27 to 59 is disordered; it reads PPGSEDPEHDDHEGQPRPRVPRKRGHISPKSRP. Over residues 45 to 55 the composition is skewed to basic residues; sequence RVPRKRGHISP. N-linked (GlcNAc...) asparagine glycans are attached at residues Asn62, Asn127, Asn137, and Asn143. The interval 76–157 is III; that stretch reads WGVLGQPPNR…LVPPSKAVEF (82 aa). The interval 158–166 is IV (linker domain); the sequence is HQEQQIFIE. A v (Cys-rich) region spans residues 167–252; that stretch reads AKASKIFNCR…HSDTPYYPSG (86 aa).

It belongs to the neurexophilin family. May be proteolytically processed at the boundary between the N-terminal non-conserved and the central conserved domain in neuron-like cells. As to expression, highest level in brain, present also in lung, kidney and testis.

Its subcellular location is the secreted. Its function is as follows. May be signaling molecules that resemble neuropeptides. Ligand for alpha-neurexins. The sequence is that of Neurexophilin-3 (Nxph3) from Mus musculus (Mouse).